Here is a 421-residue protein sequence, read N- to C-terminus: ATP-dependent RNA helicase RhlB (421 aa).

The Q motif signature appears at 9–37; the sequence is QKFSDFALHPKVVEALEKKGFHNCTPIQA. One can recognise a Helicase ATP-binding domain in the interval 40–219; it reads LPLTLAGRDV…FEQMNNAEYI (180 aa). Residue 53–60 participates in ATP binding; it reads AQTGTGKT. The DEAD box motif lies at 165-168; sequence DEAD. Positions 245–390 constitute a Helicase C-terminal domain; the sequence is RLLQTLIEEE…VSKYNPDALM (146 aa). Residues 395 to 421 form a disordered region; the sequence is KPLRLTRARTGNGPRRTGAPRNRRRSG. The span at 402 to 414 shows a compositional bias: low complexity; the sequence is ARTGNGPRRTGAP.

Belongs to the DEAD box helicase family. RhlB subfamily. In terms of assembly, component of the RNA degradosome, which is a multiprotein complex involved in RNA processing and mRNA degradation.

The protein resides in the cytoplasm. It catalyses the reaction ATP + H2O = ADP + phosphate + H(+). DEAD-box RNA helicase involved in RNA degradation. Has RNA-dependent ATPase activity and unwinds double-stranded RNA. In Shigella flexneri serotype 5b (strain 8401), this protein is ATP-dependent RNA helicase RhlB.